The sequence spans 155 residues: Large ribosomal subunit protein uL15 (155 aa).

Over residues 1-13 (MKLNELRDAEGAT) the composition is skewed to basic and acidic residues. The segment at 1 to 41 (MKLNELRDAEGATKARKRVGRGIGSGSGKTGGRGVKGQKSR) is disordered. Positions 21-35 (RGIGSGSGKTGGRGV) are enriched in gly residues.

Belongs to the universal ribosomal protein uL15 family. As to quaternary structure, part of the 50S ribosomal subunit.

Its function is as follows. Binds to the 23S rRNA. The sequence is that of Large ribosomal subunit protein uL15 from Chelativorans sp. (strain BNC1).